The primary structure comprises 417 residues: MLKKDMNIADYDPELFNAIQNETLRQEEHIELIASENYTSPRVMQAQGSQLTNKYAEGYPGKRYYGGCEYVDVVETLAIERAKQLFGATYANVQPHSGSQANSAVYMALLKPGDTVLGMNLAHGGHLTHGSPVNFSGRLYNIIPYGIDESGKIDYDEMERLAVEHKPKMMIGGFSAYSGIVDWARMREIADKIGAYLFVDMAHVAGLIAAGVYPNPVPHAHVVTSTTHKTLAGPRGGIILSAADDEELYKKLNSAVFPGGQGGPLMHVIAGKAVAFKEALEPEFKAYQQQVVKNAKAMVEVFLERGYKIVSGGTDNHLMLVDLIGRDLTGKEADAALGSANITVNKNSVPNDPRSPFVTSGVRIGTPAITRRGFKEAEAKELTGWICDILDDAHNPAVIERVKGQVLALCARFPVYG.

(6S)-5,6,7,8-tetrahydrofolate-binding positions include Leu121 and 125–127; that span reads GHL. Lys229 carries the post-translational modification N6-(pyridoxal phosphate)lysine. Position 355–357 (355–357) interacts with (6S)-5,6,7,8-tetrahydrofolate; the sequence is SPF.

It belongs to the SHMT family. Homodimer. It depends on pyridoxal 5'-phosphate as a cofactor.

Its subcellular location is the cytoplasm. The catalysed reaction is (6R)-5,10-methylene-5,6,7,8-tetrahydrofolate + glycine + H2O = (6S)-5,6,7,8-tetrahydrofolate + L-serine. Its pathway is one-carbon metabolism; tetrahydrofolate interconversion. The protein operates within amino-acid biosynthesis; glycine biosynthesis; glycine from L-serine: step 1/1. In terms of biological role, catalyzes the reversible interconversion of serine and glycine with tetrahydrofolate (THF) serving as the one-carbon carrier. This reaction serves as the major source of one-carbon groups required for the biosynthesis of purines, thymidylate, methionine, and other important biomolecules. Also exhibits THF-independent aldolase activity toward beta-hydroxyamino acids, producing glycine and aldehydes, via a retro-aldol mechanism. The chain is Serine hydroxymethyltransferase from Shewanella sp. (strain ANA-3).